Here is a 363-residue protein sequence, read N- to C-terminus: NAD(P)H-quinone oxidoreductase subunit 1, chloroplastic (363 aa).

6 helical membrane-spanning segments follow: residues 27–47 (IWLFIPIFTPVSGITIGVLVI), 98–118 (FSIGPSVVVISILLSHLVIPF), 127–147 (LSIGVSLWIAISSIAPIGLLM), 248–268 (YSGIKFGLFYLASYLNLLVSS), 300–320 (VFGTTISIFFTLAKAYLFLFI), and 336–356 (LLNLGWKFLLPIALGNLLLTT).

This sequence belongs to the complex I subunit 1 family. NDH is composed of at least 16 different subunits, 5 of which are encoded in the nucleus.

It localises to the plastid. The protein resides in the chloroplast thylakoid membrane. The catalysed reaction is a plastoquinone + NADH + (n+1) H(+)(in) = a plastoquinol + NAD(+) + n H(+)(out). It carries out the reaction a plastoquinone + NADPH + (n+1) H(+)(in) = a plastoquinol + NADP(+) + n H(+)(out). Functionally, NDH shuttles electrons from NAD(P)H:plastoquinone, via FMN and iron-sulfur (Fe-S) centers, to quinones in the photosynthetic chain and possibly in a chloroplast respiratory chain. The immediate electron acceptor for the enzyme in this species is believed to be plastoquinone. Couples the redox reaction to proton translocation, and thus conserves the redox energy in a proton gradient. This is NAD(P)H-quinone oxidoreductase subunit 1, chloroplastic from Amborella trichopoda.